A 166-amino-acid chain; its full sequence is Small ribosomal subunit protein uS9 (166 aa).

Positions 135-166 are disordered; it reads KKAGFLTRDPRATERKKYGLKKARKAPQYSKR. Positions 142 to 151 are enriched in basic and acidic residues; that stretch reads RDPRATERKK. Positions 152–166 are enriched in basic residues; that stretch reads YGLKKARKAPQYSKR.

It belongs to the universal ribosomal protein uS9 family.

The sequence is that of Small ribosomal subunit protein uS9 from Mycolicibacterium paratuberculosis (strain ATCC BAA-968 / K-10) (Mycobacterium paratuberculosis).